Here is a 42-residue protein sequence, read N- to C-terminus: Lanthionine-containing peptide SapB precursor RamS (42 aa).

The propeptide occupies 1-21 (MNLFDLQSMETPKEEAMGDVE). The tract at residues 1 to 21 (MNLFDLQSMETPKEEAMGDVE) is disordered. 2 cross-links (lanthionine (Ser-Cys)) span residues 24–31 (SRASLLLC) and 34–41 (SSLSITTC). 2,3-didehydroalanine (Ser) is present on residues Ser27 and Ser37.

This sequence belongs to the lanthionine-containing morphogen family. Post-translationally, maturation involves the enzymatic conversion of Ser into dehydrated AA and the formation of thioether bonds with cysteine, probably by RamC. This is followed by membrane translocation and cleavage of the modified precursor. The RamS precursor protein (detected by an anti-propeptide antibody and by a C-terminal His-tag) is detected from at least 16 hours post-germination; its apparent molecular weight decreases starting from about 34 hours, when its probable modifying enzyme ramC is transcribed. Surfactin, a B.subtilis cyclic lipopeptide antibiotic which prevents aerial hyphae formation in S.coelicolor, decreases localization of RamS precursor protein to the cell membrane, suggesting that processing only occurs at the cell membrane.

It is found in the cell membrane. Its subcellular location is the secreted. The protein resides in the spore wall. Its function is as follows. Stably accumulated precursor of SapB. Lanthionine-containing peptide devoid of antibiotic properties. A surface active peptide involved in the efficient formation of aerial mycelium when cells are grown in rich media. Has an overlapping function with the surface-active chaplin proteins; chaplins are essential on minimal medium while on rich medium both chaplins and SapB are required for efficient aerial hyphae formation. Required under conditions of high osmolarity where it may change the physical properties of the chaplin layer to allow hyphae to grow into air. Suggested to self-assemble at air-water interfaces, thus providing a film of surfactant through which nascent aerial hyphae can emerge; the aerial hyphae differentiate further into spores. Application to bald mutants (bld, unable to make aerial hyphae) restores hyphae growth. Application to chaplin negative mutants as well as ramC-ramS-ramA-ramB and ramR deletions also restores aerial hyphae growth and sporulation. Reduces surface tension of water from 72 to 30 mJ/m(2). The polypeptide is Lanthionine-containing peptide SapB precursor RamS (ramS) (Streptomyces coelicolor (strain ATCC BAA-471 / A3(2) / M145)).